The sequence spans 142 residues: Virulence-associated membrane protein 1 (142 aa).

Residues 1-20 (MRGILVALTAALIFCSLTPA) form the signal peptide. Residues 59 to 79 (IAIAVGTALVTLVSAGVGGML) form a helical membrane-spanning segment.

As to quaternary structure, monomer.

The protein localises to the membrane. Its function is as follows. During infection, may play a role in establishing and maintaining biotrophy; the formation of a tight interaction zone between the host and the pathogen. The polypeptide is Virulence-associated membrane protein 1 (Mycosarcoma maydis (Corn smut fungus)).